The primary structure comprises 469 residues: Trigger factor (469 aa).

A PPIase FKBP-type domain is found at 166–245 (GDFLTIDITA…VKSVKERELP (80 aa)). Positions 430–469 (GGEEEAAEAEAAPAVDSDAVEGEAATEEAAPSDDPAAVKF) are disordered.

This sequence belongs to the FKBP-type PPIase family. Tig subfamily.

It localises to the cytoplasm. The enzyme catalyses [protein]-peptidylproline (omega=180) = [protein]-peptidylproline (omega=0). In terms of biological role, involved in protein export. Acts as a chaperone by maintaining the newly synthesized protein in an open conformation. Functions as a peptidyl-prolyl cis-trans isomerase. The protein is Trigger factor of Arthrobacter sp. (strain FB24).